The primary structure comprises 435 residues: Elongation factor 1-alpha (435 aa).

Positions 4–229 (KPHLNLIVIG…DQLEIPPKPV (226 aa)) constitute a tr-type G domain. Positions 13–20 (GHVDHGKS) are G1. 13-20 (GHVDHGKS) contacts GTP. Position 20 (Ser20) interacts with Mg(2+). The G2 stretch occupies residues 69-73 (GVTIN). Residues 90 to 93 (DAPG) are G3. Residues 90-94 (DAPGH) and 152-155 (NKMD) each bind GTP. The tract at residues 152–155 (NKMD) is G4. The G5 stretch occupies residues 193–195 (VAP).

The protein belongs to the TRAFAC class translation factor GTPase superfamily. Classic translation factor GTPase family. EF-Tu/EF-1A subfamily.

The protein localises to the cytoplasm. The catalysed reaction is GTP + H2O = GDP + phosphate + H(+). Functionally, GTP hydrolase that promotes the GTP-dependent binding of aminoacyl-tRNA to the A-site of ribosomes during protein biosynthesis. The chain is Elongation factor 1-alpha from Sulfolobus acidocaldarius (strain ATCC 33909 / DSM 639 / JCM 8929 / NBRC 15157 / NCIMB 11770).